The following is a 225-amino-acid chain: Ribonuclease 3 (225 aa).

The RNase III domain occupies 7 to 129 (LPRLGRILGY…IIGAIYLDAD (123 aa)). Glu42 contributes to the Mg(2+) binding site. The active site involves Asp46. Mg(2+)-binding residues include Asp115 and Glu118. Glu118 is a catalytic residue. The DRBM domain occupies 155–225 (DPKTLLQEHL…AAEVLERIKK (71 aa)).

The protein belongs to the ribonuclease III family. As to quaternary structure, homodimer. The cofactor is Mg(2+).

The protein localises to the cytoplasm. The catalysed reaction is Endonucleolytic cleavage to 5'-phosphomonoester.. Digests double-stranded RNA. Involved in the processing of primary rRNA transcript to yield the immediate precursors to the large and small rRNAs (23S and 16S). Processes some mRNAs, and tRNAs when they are encoded in the rRNA operon. Processes pre-crRNA and tracrRNA of type II CRISPR loci if present in the organism. The polypeptide is Ribonuclease 3 (Shewanella loihica (strain ATCC BAA-1088 / PV-4)).